The chain runs to 419 residues: Inward rectifier potassium channel 16 (419 aa).

Residues methionine 1 to aspartate 67 lie on the Cytoplasmic side of the membrane. Residues threonine 68–leucine 94 form a helical membrane-spanning segment. Residues isoleucine 95–serine 117 lie on the Extracellular side of the membrane. Positions phenylalanine 118–tyrosine 134 form an intramembrane region, helical; Pore-forming. The Selectivity filter signature appears at threonine 131–tyrosine 136. Over glycine 135 to cysteine 143 the chain is Extracellular. Residues serine 144–lysine 171 traverse the membrane as a helical segment. Residues methionine 172–methionine 419 are Cytoplasmic-facing. Phosphoserine is present on residues serine 358, serine 374, and serine 376.

This sequence belongs to the inward rectifier-type potassium channel (TC 1.A.2.1) family. KCNJ16 subfamily. In terms of assembly, it forms heteromeric channels with Kir4.1/KCNJ10; this interaction is required for KCNJ16 localization to the basolateral membrane in kidney cells. As a heteromer with KCNJ10, may interact with MAGI1; this interaction may facilitate KCNJ10/KCNJ16 potassium channel expression at the basolateral membrane in kidney cells. May form heteromers with Kir2.1/KCNJ2. Can form heteromeric channels with Kir4.2/KCNJ15. As to expression, expressed in the brain, testis, liver, spleen, kidney, submaxillary gland and adrenals. In the kidney, expressed in the epithelial cells of both proximal and distal convoluted tubules, in the endothelial cells surrounding glomerular capillaries and in the flattened parietal layer of Bowman's capsule.

It localises to the membrane. It is found in the basolateral cell membrane. The catalysed reaction is K(+)(in) = K(+)(out). With respect to regulation, channel activity is strongly regulated by variations of cytosolic pH; channels are activated by alkaline and inhibited by acidic pH values. Activated by phosphatidylinositol 4,5 biphosphate (PtdIns(4,5)P2). Functionally, inward rectifier potassium channels are characterized by a greater tendency to allow potassium to flow into the cell rather than out of it. Their voltage dependence is regulated by the concentration of extracellular potassium; as external potassium is raised, the voltage range of the channel opening shifts to more positive voltages. The inward rectification is mainly due to the blockage of outward current by internal magnesium. KCNJ16 may be involved in the regulation of fluid and pH balance. In the kidney, together with KCNJ10, mediates basolateral K(+) recycling in distal tubules; this process is critical for Na(+) reabsorption at the tubules. This is Inward rectifier potassium channel 16 (Kcnj16) from Rattus norvegicus (Rat).